Here is a 325-residue protein sequence, read N- to C-terminus: MEVVVARQPKAKKQINLFYCSECEELALKVAASSDTIHLQSINWRSFDDGFPNLFINNAHDIRGQHVAFLASFSSPSVIFEQISVIFALPKLFIASFTLVLPFFPTGSFERVEEEGDVATAFTLARILSMIPKSRGGPTSVVIYDIHALQERFYFGDDVLPCFETGIPLLLQRLRQLPDADNITIAFPDDGAWKRFHKLLLNFPMVVCAKVREGDKRIVRIKEGNPEGRHVVIVDDLVQSGGTLRECQKVLAAHGAAKVSAYVTHAVFPKQSYERFTHTNSAGSADKFAYFWITDSCPQTVKAINQQPPFEVLSLAGSIADALQI.

Mg(2+) is bound by residues Asp145 and His147. Residues 228–243 form a binding of phosphoribosylpyrophosphate region; it reads GRHVVIVDDLVQSGGT.

This sequence belongs to the ribose-phosphate pyrophosphokinase family. Mg(2+) is required as a cofactor.

The catalysed reaction is D-ribose 5-phosphate + ATP = 5-phospho-alpha-D-ribose 1-diphosphate + AMP + H(+). The chain is Ribose-phosphate pyrophosphokinase 4 from Oryza sativa subsp. japonica (Rice).